Reading from the N-terminus, the 901-residue chain is MQTHEIRKRFLDHFVKAGHTEVPSASVILDDPNLLFVNAGMVQFVPFFLGQRTPPYATATSIQKCIRTPDIDEVGITTRHNTFFQMAGNFSFGDYFKRGAIELAWALLTNSVADGGYGLDPEKLWATVYLDDDEAAGLWREVAGLPADRIQRRGMADNYWSMGIPGPCGPSSEIYYDRGPDYGPEGGPVVNEDRYLEIWNLVFMQNERGEGTTKEDYEILGPLPRKNIDTGMGVERVALILQGVPNVYETDLLRPIIDLVAARAPRGYDQGNHADDVRYRIIADHSRTAAILIADGVSPGNDGRGYVLRRLLRRVIRSAKLLNIDTAIVGDLMATVRDAMGPSYPELASDSDRINRIAVAEETAFNRTLASGSRLFDEVAGATRSSGVSVVSGSDAFTLHDTYGFPIELTLEMASEAGLTVDEGGFRELMAQQRRRAKADAAARKHAHADLTAYRELVDAGPTEFTGFDELTSEARILGIFVDGKRVPVVAHGQAVDADRVELVLDRTPLYAESGGQIADVGTISGTGSGSSARAAVTDVQKIAKTLWLHRVNVESGEFVEGDGVVAAADAGWRKGATQGHSGTHMVHAALRQVLGPNAVQAGSLNRPGYLRFDFNWQGPLTEEQRGQIEEVTNQAVQADFAVHTFTEQLEKAKAMGAMALFGECYPDEVRVVEIGGPFSIELCGGTHVATSAQIGPVTILGESSIGSGVRRVEAYVGLDSFRHLAKERALMAGLASSLKVPSEEVPARVASLVERLKAAEKELERARLASVRAAAVNAAAGAERIGNVRLVAQRMSSEMTPADLRTLVGDIRGKLGSDPAVVALIAAPAGGESSTVPYVVAANQAAQGLGLGANELIKHLAAAVDGRGGGKADLAQGSGKKPAGIAAALEALRAEIARVG.

4 residues coordinate Zn(2+): histidine 581, histidine 585, cysteine 684, and histidine 688.

This sequence belongs to the class-II aminoacyl-tRNA synthetase family. The cofactor is Zn(2+).

It is found in the cytoplasm. The catalysed reaction is tRNA(Ala) + L-alanine + ATP = L-alanyl-tRNA(Ala) + AMP + diphosphate. Its function is as follows. Catalyzes the attachment of alanine to tRNA(Ala) in a two-step reaction: alanine is first activated by ATP to form Ala-AMP and then transferred to the acceptor end of tRNA(Ala). Also edits incorrectly charged Ser-tRNA(Ala) and Gly-tRNA(Ala) via its editing domain. The chain is Alanine--tRNA ligase from Mycobacterium ulcerans (strain Agy99).